The sequence spans 26 residues: Cytochrome c oxidase subunit 2 (26 aa).

This sequence belongs to the cytochrome c oxidase subunit 2 family. Component of the cytochrome c oxidase (complex IV, CIV), a multisubunit enzyme composed of a catalytic core of 3 subunits and several supernumerary subunits. The complex exists as a monomer or a dimer and forms supercomplexes (SCs) in the inner mitochondrial membrane with ubiquinol-cytochrome c oxidoreductase (cytochrome b-c1 complex, complex III, CIII). The cofactor is Cu cation.

It localises to the mitochondrion inner membrane. The enzyme catalyses 4 Fe(II)-[cytochrome c] + O2 + 8 H(+)(in) = 4 Fe(III)-[cytochrome c] + 2 H2O + 4 H(+)(out). Its function is as follows. Component of the cytochrome c oxidase, the last enzyme in the mitochondrial electron transport chain which drives oxidative phosphorylation. The respiratory chain contains 3 multisubunit complexes succinate dehydrogenase (complex II, CII), ubiquinol-cytochrome c oxidoreductase (cytochrome b-c1 complex, complex III, CIII) and cytochrome c oxidase (complex IV, CIV), that cooperate to transfer electrons derived from NADH and succinate to molecular oxygen, creating an electrochemical gradient over the inner membrane that drives transmembrane transport and the ATP synthase. Cytochrome c oxidase is the component of the respiratory chain that catalyzes the reduction of oxygen to water. Electrons originating from reduced cytochrome c in the intermembrane space (IMS) are transferred via the dinuclear copper A center (CU(A)) of subunit 2 and heme A of subunit 1 to the active site in subunit 1, a binuclear center (BNC) formed by heme A3 and copper B (CU(B)). The BNC reduces molecular oxygen to 2 water molecules using 4 electrons from cytochrome c in the IMS and 4 protons from the mitochondrial matrix. The sequence is that of Cytochrome c oxidase subunit 2 (COX2) from Solanum tuberosum (Potato).